We begin with the raw amino-acid sequence, 864 residues long: Leucine--tRNA ligase (864 aa).

The 'HIGH' region motif lies at 42–52; it reads PYPSGKLHMGH. Positions 624-628 match the 'KMSKS' region motif; that stretch reads KMSKS. Lys627 is a binding site for ATP.

This sequence belongs to the class-I aminoacyl-tRNA synthetase family.

Its subcellular location is the cytoplasm. It carries out the reaction tRNA(Leu) + L-leucine + ATP = L-leucyl-tRNA(Leu) + AMP + diphosphate. This is Leucine--tRNA ligase from Burkholderia lata (strain ATCC 17760 / DSM 23089 / LMG 22485 / NCIMB 9086 / R18194 / 383).